A 107-amino-acid chain; its full sequence is U1-lycotoxin-Ls1b (107 aa).

Positions 1-20 (MMKVLVVVALLVTLISYSSS) are cleaved as a signal peptide. A propeptide spanning residues 21–41 (EGIDDLEADELLSLMANEQTR) is cleaved from the precursor. 4 cysteine pairs are disulfide-bonded: C44/C59, C51/C68, C58/C86, and C70/C84.

This sequence belongs to the neurotoxin 19 (CSTX) family. 04 (U1-Lctx) subfamily. Expressed by the venom gland.

It is found in the secreted. This Lycosa singoriensis (Wolf spider) protein is U1-lycotoxin-Ls1b.